The primary structure comprises 101 residues: Small ribosomal subunit protein bS21 (101 aa).

The span at 36–52 (YEKPSEKKAREKAEAVR) shows a compositional bias: basic and acidic residues. The disordered stretch occupies residues 36 to 101 (YEKPSEKKAR…GPGAGPRGPR (66 aa)). Residues 53 to 62 (RARKLARKKL) show a composition bias toward basic residues. Positions 83–101 (PGAGGPGAGGPGAGPRGPR) are enriched in gly residues.

This sequence belongs to the bacterial ribosomal protein bS21 family.

This Rhodopseudomonas palustris (strain HaA2) protein is Small ribosomal subunit protein bS21.